We begin with the raw amino-acid sequence, 283 residues long: Putative S-adenosyl-L-methionine-dependent methyltransferase SAV_474/SAV474 (283 aa).

Residues D121 and 150 to 151 (DL) each bind S-adenosyl-L-methionine. The interval 258 to 283 (AAYGRPISTPPQREERPGGLISAVRR) is disordered.

The protein belongs to the UPF0677 family.

Functionally, exhibits S-adenosyl-L-methionine-dependent methyltransferase activity. In Streptomyces avermitilis (strain ATCC 31267 / DSM 46492 / JCM 5070 / NBRC 14893 / NCIMB 12804 / NRRL 8165 / MA-4680), this protein is Putative S-adenosyl-L-methionine-dependent methyltransferase SAV_474/SAV474.